We begin with the raw amino-acid sequence, 157 residues long: 3-hydroxyacyl-[acyl-carrier-protein] dehydratase FabZ (157 aa).

Residue His-58 is part of the active site.

The protein belongs to the thioester dehydratase family. FabZ subfamily.

The protein resides in the cytoplasm. The enzyme catalyses a (3R)-hydroxyacyl-[ACP] = a (2E)-enoyl-[ACP] + H2O. In terms of biological role, involved in unsaturated fatty acids biosynthesis. Catalyzes the dehydration of short chain beta-hydroxyacyl-ACPs and long chain saturated and unsaturated beta-hydroxyacyl-ACPs. The polypeptide is 3-hydroxyacyl-[acyl-carrier-protein] dehydratase FabZ (Rhizobium rhizogenes (strain K84 / ATCC BAA-868) (Agrobacterium radiobacter)).